A 239-amino-acid chain; its full sequence is ATP synthase subunit a (239 aa).

5 helical membrane-spanning segments follow: residues 27 to 47, 86 to 106, 125 to 145, 190 to 210, and 211 to 231; these read GQVFLSSWIVIGALLAVVVLG, LPFIGTLFLFIFVSNWGGALI, INTTVAMALLVSLAFFYAGLS, LAVAVLASLVPLLVPLPVMLL, and GLFTSAIQALIFATLAAFYIG.

The protein belongs to the ATPase A chain family. F-type ATPases have 2 components, CF(1) - the catalytic core - and CF(0) - the membrane proton channel. CF(1) has five subunits: alpha(3), beta(3), gamma(1), delta(1), epsilon(1). CF(0) has four main subunits: a, b, b' and c.

The protein resides in the cellular thylakoid membrane. Its function is as follows. Key component of the proton channel; it plays a direct role in the translocation of protons across the membrane. The sequence is that of ATP synthase subunit a from Synechococcus sp. (strain RCC307).